Consider the following 23-residue polypeptide: Septenin 2c (23 aa).

In terms of tissue distribution, expressed in skin granular glands.

It localises to the secreted. In terms of biological role, may act as an antimicrobial peptide. In Osteopilus septentrionalis (Cuban treefrog), this protein is Septenin 2c.